Reading from the N-terminus, the 169-residue chain is Ribosome maturation factor RimM (169 aa).

Residues 97 to 169 (PGEYYWYQLI…VITVDWDMNF (73 aa)) enclose the PRC barrel domain.

Belongs to the RimM family. In terms of assembly, binds ribosomal protein uS19.

The protein localises to the cytoplasm. In terms of biological role, an accessory protein needed during the final step in the assembly of 30S ribosomal subunit, possibly for assembly of the head region. Essential for efficient processing of 16S rRNA. May be needed both before and after RbfA during the maturation of 16S rRNA. It has affinity for free ribosomal 30S subunits but not for 70S ribosomes. This is Ribosome maturation factor RimM from Legionella pneumophila subsp. pneumophila (strain Philadelphia 1 / ATCC 33152 / DSM 7513).